Reading from the N-terminus, the 342-residue chain is Prostasin (342 aa).

The first 29 residues, 1–29 (MAPRVGLGLGQLEAVTILLLLGLLQSGIR), serve as a signal peptide directing secretion. A propeptide spans 30–32 (ADG) (activation peptide). Disulfide bonds link Cys37–Cys154 and Cys70–Cys86. The Peptidase S1 domain occupies 45 to 286 (ITGGGSAKPG…YASWIHHHVA (242 aa)). Residue His85 is the Charge relay system of the active site. Asn110 is a glycosylation site (N-linked (GlcNAc...) asparagine). The active-site Charge relay system is the Asp134. A glycan (N-linked (GlcNAc...) asparagine) is linked at Asn159. Intrachain disulfides connect Cys168–Cys244, Cys201–Cys223, and Cys234–Cys262. Ser238 (charge relay system) is an active-site residue. Residues 320 to 340 (LLRPVLFLPLGLTLGLLSLWL) form a helical membrane-spanning segment. A propeptide spanning residues 323–342 (PVLFLPLGLTLGLLSLWLEH) is cleaved from the precursor.

The protein belongs to the peptidase S1 family. In terms of assembly, heterodimer of two chains, light and heavy, held by a disulfide bond.

Its subcellular location is the cell membrane. The protein resides in the secreted. It localises to the extracellular space. Its function is as follows. Possesses a trypsin-like cleavage specificity with a preference for poly-basic substrates. Stimulates epithelial sodium channel (ENaC) activity through activating cleavage of the gamma subunits (SCNN1G). This chain is Prostasin (Prss8), found in Mus musculus (Mouse).